We begin with the raw amino-acid sequence, 371 residues long: Ferrochelatase (371 aa).

Residues H218 and E299 each contribute to the Fe cation site.

It belongs to the ferrochelatase family.

Its subcellular location is the cytoplasm. It catalyses the reaction heme b + 2 H(+) = protoporphyrin IX + Fe(2+). It participates in porphyrin-containing compound metabolism; protoheme biosynthesis; protoheme from protoporphyrin-IX: step 1/1. Functionally, catalyzes the ferrous insertion into protoporphyrin IX. The protein is Ferrochelatase of Cupriavidus necator (strain ATCC 17699 / DSM 428 / KCTC 22496 / NCIMB 10442 / H16 / Stanier 337) (Ralstonia eutropha).